The following is a 649-amino-acid chain: Beta-galactosidase-1-like protein 3 (649 aa).

The active-site Proton donor is the Glu-203. The Nucleophile role is filled by Glu-277.

This sequence belongs to the glycosyl hydrolase 35 family.

The protein is Beta-galactosidase-1-like protein 3 (Glb1l3) of Mus musculus (Mouse).